Here is a 150-residue protein sequence, read N- to C-terminus: Large ribosomal subunit protein bL9 (150 aa).

It belongs to the bacterial ribosomal protein bL9 family.

Its function is as follows. Binds to the 23S rRNA. This chain is Large ribosomal subunit protein bL9, found in Streptococcus agalactiae serotype III (strain NEM316).